Here is a 201-residue protein sequence, read N- to C-terminus: Oxalate oxidase 1 (201 aa).

A disulfide bond links C10 and C26. A Cupin type-1 domain is found at 40-191; it reads SKLTKAGNTS…ALRVEAGVVE (152 aa). N-linked (GlcNAc...) asparagine glycosylation is present at N47. Oxalate is bound by residues N75 and N85. Residues H88, H90, E95, and H137 each coordinate Mn(2+). 2 residues coordinate oxalate: H90 and E95.

The protein belongs to the germin family. Homo hexamer; a trimer of dimers. Post-translationally, glycosylated. A form called G contains antennary GlcNAc residues, whereas a form called G' lacks antennary GlcNAc residues in its otherwise identical glycans.

Its subcellular location is the secreted. The protein resides in the extracellular space. It localises to the apoplast. The protein localises to the cell wall. The catalysed reaction is oxalate + O2 + 2 H(+) = H2O2 + 2 CO2. Releases hydrogen peroxide in the apoplast which may be important for cross-linking reactions in the cell wall biochemistry. May play an important role in several aspects of plant growth and defense mechanisms. This chain is Oxalate oxidase 1, found in Hordeum vulgare (Barley).